The primary structure comprises 209 residues: MDLHNIREDYSKQELSQAHCHADPIQQFEQWLEEAITAKANEPTAMNVATVLDGKPTSRIVLLKEVNPNGFVFFTNYQSRKGQAIEQNPYVALTFFWAELERSVRIEGRIEKISAEQSDNYFAGRPYTSRVGAWASNQSQVLSSKSELVAKAALIAAKHPLHVPRPPHWGGYIVLPERIEFWQGRPSRLHDRICYRLVEGAWHKERLSP.

Residues 7–10 and Lys64 contribute to the substrate site; that span reads REDY. Residues 59-64, 74-75, Arg80, and Lys81 each bind FMN; these read RIVLLK and FT. 3 residues coordinate substrate: Tyr121, Arg125, and Ser129. FMN-binding positions include 138–139 and Trp182; that span reads QS. Residue 188–190 coordinates substrate; it reads RLH. Arg192 is an FMN binding site.

It belongs to the pyridoxamine 5'-phosphate oxidase family. In terms of assembly, homodimer. Requires FMN as cofactor.

The catalysed reaction is pyridoxamine 5'-phosphate + O2 + H2O = pyridoxal 5'-phosphate + H2O2 + NH4(+). The enzyme catalyses pyridoxine 5'-phosphate + O2 = pyridoxal 5'-phosphate + H2O2. Its pathway is cofactor metabolism; pyridoxal 5'-phosphate salvage; pyridoxal 5'-phosphate from pyridoxamine 5'-phosphate: step 1/1. The protein operates within cofactor metabolism; pyridoxal 5'-phosphate salvage; pyridoxal 5'-phosphate from pyridoxine 5'-phosphate: step 1/1. Catalyzes the oxidation of either pyridoxine 5'-phosphate (PNP) or pyridoxamine 5'-phosphate (PMP) into pyridoxal 5'-phosphate (PLP). This Actinobacillus pleuropneumoniae serotype 7 (strain AP76) protein is Pyridoxine/pyridoxamine 5'-phosphate oxidase.